The sequence spans 1434 residues: Pleiotropic drug resistance protein 1 (1434 aa).

Positions 1 to 22 are disordered; that stretch reads MEPANLSNLRGSSLRGSTRGSL. An ABC transporter 1 domain is found at 161-434; it reads LNSLHILSSR…FESMGFKCPQ (274 aa). An ATP-binding site is contributed by 194–201; the sequence is GPPSSGKT. The 214-residue stretch at 512-725 folds into the ABC transmembrane type-2 1 domain; that stretch reads ELLKVCTERE…SVNSILVNEF (214 aa). Helical transmembrane passes span 530–550, 563–583, 618–638, 649–669, 675–695, 702–722, and 760–780; these read FVYMFKFSQLTIMALITMTLF, GGIYAGALFFVVIMIMFNGMS, IPVTLVEVGLWVILTYYVIGF, FLLLIVVNQMASGMFRFIGAV, VASTFGSFALLLQFALGGFVL, SWWIWGYWISPMMYSVNSILV, and IGVGALVGFTVVFNFCYSLAL. The tract at residues 793–824 is disordered; the sequence is LPEDGENAENGEVSSQITSTDGGDSISESQNN. Positions 804–824 are enriched in polar residues; sequence EVSSQITSTDGGDSISESQNN. One can recognise an ABC transporter 2 domain in the interval 837 to 1089; it reads ITFDDVVYSV…HLIKYFESNP (253 aa). 882-889 is a binding site for ATP; that stretch reads GVSGAGKT. Positions 1162 to 1376 constitute an ABC transmembrane type-2 2 domain; sequence TQCVACLWKQ…TLYGLVASQF (215 aa). 7 helical membrane passes run 1181 to 1201, 1221 to 1241, 1269 to 1289, 1296 to 1316, 1326 to 1346, 1357 to 1377, and 1406 to 1426; these read YTAVRFIFTTFIALIFGTMFW, YAAVLFLGVQNASSVQPVVAI, IPYIFVQSVFYGIIVYAMIGF, FFWYLFIMFFTLLYFTFYGMM, VASIVAAFFYGVWNLFSGFII, WYYWANPVAWTLYGLVASQFG, and VVAAVLTAYVFMFAFTFAFAI.

This sequence belongs to the ABC transporter superfamily. ABCG family. PDR (TC 3.A.1.205) subfamily.

It localises to the membrane. In terms of biological role, may be a general defense protein. The polypeptide is Pleiotropic drug resistance protein 1 (PDR1) (Nicotiana tabacum (Common tobacco)).